Reading from the N-terminus, the 452-residue chain is L-seryl-tRNA(Sec) selenium transferase (452 aa).

K285 carries the post-translational modification N6-(pyridoxal phosphate)lysine.

It belongs to the SelA family. Requires pyridoxal 5'-phosphate as cofactor.

It localises to the cytoplasm. The enzyme catalyses L-seryl-tRNA(Sec) + selenophosphate + H(+) = L-selenocysteinyl-tRNA(Sec) + phosphate. It functions in the pathway aminoacyl-tRNA biosynthesis; selenocysteinyl-tRNA(Sec) biosynthesis; selenocysteinyl-tRNA(Sec) from L-seryl-tRNA(Sec) (bacterial route): step 1/1. In terms of biological role, converts seryl-tRNA(Sec) to selenocysteinyl-tRNA(Sec) required for selenoprotein biosynthesis. The polypeptide is L-seryl-tRNA(Sec) selenium transferase (Aquifex aeolicus (strain VF5)).